A 329-amino-acid polypeptide reads, in one-letter code: Mas-related G-protein coupled receptor member X2 (329 aa).

Over 1 to 33 (MDPTTPAWRTESTTMNGNDQALPLLCGKEILIS) the chain is Extracellular. The helical transmembrane segment at 34 to 54 (VFLILFIALVGLVGNGFVLWL) threads the bilayer. Residues 55 to 63 (LGFRMRRNA) are Cytoplasmic-facing. Residues 64-84 (FSVYVLSLAGADFLFLCFQII) form a helical membrane-spanning segment. The Extracellular segment spans residues 85–96 (NCLVYLSNFFCS). The helical transmembrane segment at 97–117 (SSINFPSFFTTVMTCAYLAGL) threads the bilayer. The Cytoplasmic segment spans residues 118–144 (SMLSTISTERCLSVLWPIWYRCRRPRH). Residues 145 to 165 (LSAVACVLLWALSLLLSILEG) traverse the membrane as a helical segment. The Extracellular portion of the chain corresponds to 166 to 183 (KFCGLFGDGDSGWCQTFD). Residues 184-204 (LITAAWLIFLFMVLCGSSLAL) form a helical membrane-spanning segment. The Cytoplasmic segment spans residues 205–227 (LVRILCGSRGLPLTRLYLTILLT). The chain crosses the membrane as a helical span at residues 228–248 (VLVFLLCGLPFGIQWFLILWI). Over 249–263 (WKNSDVLFCHIHPVS) the chain is Extracellular. The chain crosses the membrane as a helical span at residues 264 to 284 (VVLSSLNSSANPIIYFFVGSF). The Cytoplasmic portion of the chain corresponds to 285–329 (RKQWQLQQPILKLALQRALQDIAEVDHSEGCFRQGTPEMSRSSLV).

It belongs to the G-protein coupled receptor 1 family. Mas subfamily.

The protein resides in the cell membrane. Functionally, mast cell-specific receptor for basic secretagogues, i.e. cationic amphiphilic drugs, as well as endo- or exogenous peptides, consisting of a basic head group and a hydrophobic core. Recognizes and binds small molecules containing a cyclized tetrahydroisoquinoline (THIQ), such as non-steroidal neuromuscular blocking drugs (NMBDs), including tubocurarine and atracurium. In response to these compounds, mediates pseudo-allergic reactions characterized by histamine release, inflammation and airway contraction. This chain is Mas-related G-protein coupled receptor member X2 (MRGPRX2), found in Gorilla gorilla gorilla (Western lowland gorilla).